A 115-amino-acid chain; its full sequence is Immunoglobulin kappa variable 5-2 (115 aa).

Residues 1–20 (MGSQVHLLSFLLLWISDTRA) form the signal peptide. Positions 21–43 (ETTLTQSPAFMSATPGDKVNISC) are framework-1. Positions 22-115 (TTLTQSPAFM…YFCLQHDNFP (94 aa)) constitute an Ig-like domain. An N-linked (GlcNAc...) asparagine glycan is attached at asparagine 40. Serine 42 bears the Phosphoserine mark. Cysteine 43 and cysteine 108 are joined by a disulfide. A complementarity-determining-1 region spans residues 44–54 (KASQDIDDDMN). Residues 55-69 (WYQQKPGEAAIFIIQ) are framework-2. The tract at residues 70–76 (EATTLVP) is complementarity-determining-2. The interval 77–108 (GIPPRFSGSGYGTDFTLTINNIESEDAAYYFC) is framework-3. Residues 109-115 (LQHDNFP) form a complementarity-determining-3 region.

As to quaternary structure, immunoglobulins are composed of two identical heavy chains and two identical light chains; disulfide-linked.

The protein resides in the secreted. It is found in the cell membrane. V region of the variable domain of immunoglobulin light chains that participates in the antigen recognition. Immunoglobulins, also known as antibodies, are membrane-bound or secreted glycoproteins produced by B lymphocytes. In the recognition phase of humoral immunity, the membrane-bound immunoglobulins serve as receptors which, upon binding of a specific antigen, trigger the clonal expansion and differentiation of B lymphocytes into immunoglobulins-secreting plasma cells. Secreted immunoglobulins mediate the effector phase of humoral immunity, which results in the elimination of bound antigens. The antigen binding site is formed by the variable domain of one heavy chain, together with that of its associated light chain. Thus, each immunoglobulin has two antigen binding sites with remarkable affinity for a particular antigen. The variable domains are assembled by a process called V-(D)-J rearrangement and can then be subjected to somatic hypermutations which, after exposure to antigen and selection, allow affinity maturation for a particular antigen. The chain is Immunoglobulin kappa variable 5-2 from Homo sapiens (Human).